The sequence spans 229 residues: Ribonuclease 3 (229 aa).

Residues 5 to 127 (LDRLERKLGY…LIGAIYQDAD (123 aa)) enclose the RNase III domain. A Mg(2+)-binding site is contributed by glutamate 40. Aspartate 44 is an active-site residue. 2 residues coordinate Mg(2+): aspartate 113 and glutamate 116. Residue glutamate 116 is part of the active site. The DRBM domain occupies 154 to 224 (DPKTRLQEFL…AAAALIALGV (71 aa)).

It belongs to the ribonuclease III family. In terms of assembly, homodimer. Requires Mg(2+) as cofactor.

It is found in the cytoplasm. It catalyses the reaction Endonucleolytic cleavage to 5'-phosphomonoester.. Functionally, digests double-stranded RNA. Involved in the processing of primary rRNA transcript to yield the immediate precursors to the large and small rRNAs (23S and 16S). Processes some mRNAs, and tRNAs when they are encoded in the rRNA operon. Processes pre-crRNA and tracrRNA of type II CRISPR loci if present in the organism. The polypeptide is Ribonuclease 3 (Pseudomonas entomophila (strain L48)).